Consider the following 262-residue polypeptide: Acyl-[acyl-carrier-protein]--UDP-N-acetylglucosamine O-acyltransferase (262 aa).

The protein belongs to the transferase hexapeptide repeat family. LpxA subfamily. In terms of assembly, homotrimer.

The protein localises to the cytoplasm. It carries out the reaction a (3R)-hydroxyacyl-[ACP] + UDP-N-acetyl-alpha-D-glucosamine = a UDP-3-O-[(3R)-3-hydroxyacyl]-N-acetyl-alpha-D-glucosamine + holo-[ACP]. Its pathway is glycolipid biosynthesis; lipid IV(A) biosynthesis; lipid IV(A) from (3R)-3-hydroxytetradecanoyl-[acyl-carrier-protein] and UDP-N-acetyl-alpha-D-glucosamine: step 1/6. Its function is as follows. Involved in the biosynthesis of lipid A, a phosphorylated glycolipid that anchors the lipopolysaccharide to the outer membrane of the cell. The polypeptide is Acyl-[acyl-carrier-protein]--UDP-N-acetylglucosamine O-acyltransferase (Shigella flexneri serotype 5b (strain 8401)).